A 583-amino-acid chain; its full sequence is Threonine--tRNA ligase (583 aa).

The catalytic stretch occupies residues 185–478 (DHRKLGRELD…LVEHYGGAFP (294 aa)). Zn(2+) is bound by residues Cys-278, His-329, and His-455.

It belongs to the class-II aminoacyl-tRNA synthetase family. In terms of assembly, homodimer. It depends on Zn(2+) as a cofactor.

Its subcellular location is the cytoplasm. It catalyses the reaction tRNA(Thr) + L-threonine + ATP = L-threonyl-tRNA(Thr) + AMP + diphosphate + H(+). Functionally, catalyzes the attachment of threonine to tRNA(Thr) in a two-step reaction: L-threonine is first activated by ATP to form Thr-AMP and then transferred to the acceptor end of tRNA(Thr). Also edits incorrectly charged L-seryl-tRNA(Thr). The polypeptide is Threonine--tRNA ligase (Borrelia turicatae (strain 91E135)).